The sequence spans 419 residues: Serine--tRNA ligase (419 aa).

Threonine 226 to glutamate 228 is an L-serine binding site. ATP contacts are provided by residues arginine 257 to glutamate 259 and valine 273. An L-serine-binding site is contributed by glutamate 280. An ATP-binding site is contributed by glutamate 344 to serine 347. Threonine 379 is an L-serine binding site.

It belongs to the class-II aminoacyl-tRNA synthetase family. Type-1 seryl-tRNA synthetase subfamily. Homodimer. The tRNA molecule binds across the dimer.

It localises to the cytoplasm. It carries out the reaction tRNA(Ser) + L-serine + ATP = L-seryl-tRNA(Ser) + AMP + diphosphate + H(+). The catalysed reaction is tRNA(Sec) + L-serine + ATP = L-seryl-tRNA(Sec) + AMP + diphosphate + H(+). It functions in the pathway aminoacyl-tRNA biosynthesis; selenocysteinyl-tRNA(Sec) biosynthesis; L-seryl-tRNA(Sec) from L-serine and tRNA(Sec): step 1/1. Functionally, catalyzes the attachment of serine to tRNA(Ser). Is also able to aminoacylate tRNA(Sec) with serine, to form the misacylated tRNA L-seryl-tRNA(Sec), which will be further converted into selenocysteinyl-tRNA(Sec). The protein is Serine--tRNA ligase of Mycobacterium tuberculosis (strain CDC 1551 / Oshkosh).